Consider the following 1536-residue polypeptide: Ferredoxin-dependent glutamate synthase (1536 aa).

C27 (for GATase activity) is an active-site residue. In terms of domain architecture, Glutamine amidotransferase type-2 spans C27–S427. Residue L1105–R1162 coordinates FMN. 3 residues coordinate [3Fe-4S] cluster: C1158, C1164, and C1169.

This sequence belongs to the glutamate synthase family. In terms of assembly, monomer. [3Fe-4S] cluster serves as cofactor. FAD is required as a cofactor. Requires FMN as cofactor.

The protein localises to the plastid. It is found in the chloroplast stroma. The enzyme catalyses 2 oxidized [2Fe-2S]-[ferredoxin] + 2 L-glutamate = L-glutamine + 2 reduced [2Fe-2S]-[ferredoxin] + 2-oxoglutarate + 2 H(+). Its pathway is amino-acid biosynthesis; L-glutamate biosynthesis via GLT pathway; L-glutamate from 2-oxoglutarate and L-glutamine (ferredoxin route): step 1/1. It participates in energy metabolism; nitrogen metabolism. The sequence is that of Ferredoxin-dependent glutamate synthase (gltB) from Antithamnion sp. (Red alga).